Consider the following 54-residue polypeptide: ATP synthase protein 8 (54 aa).

A helical transmembrane segment spans residues 13–32 (ITFTFVIITLMVYILSKYIL).

Belongs to the ATPase protein 8 family. In terms of assembly, F-type ATPases have 2 components, CF(1) - the catalytic core - and CF(0) - the membrane proton channel.

The protein resides in the mitochondrion membrane. In terms of biological role, mitochondrial membrane ATP synthase (F(1)F(0) ATP synthase or Complex V) produces ATP from ADP in the presence of a proton gradient across the membrane which is generated by electron transport complexes of the respiratory chain. F-type ATPases consist of two structural domains, F(1) - containing the extramembraneous catalytic core and F(0) - containing the membrane proton channel, linked together by a central stalk and a peripheral stalk. During catalysis, ATP synthesis in the catalytic domain of F(1) is coupled via a rotary mechanism of the central stalk subunits to proton translocation. Part of the complex F(0) domain. Minor subunit located with subunit a in the membrane. This chain is ATP synthase protein 8 (atp-8), found in Neurospora crassa (strain ATCC 24698 / 74-OR23-1A / CBS 708.71 / DSM 1257 / FGSC 987).